Reading from the N-terminus, the 452-residue chain is Chaperone SurA (452 aa).

A signal peptide spans 1-28 (MKKTLRFAAVVSSLAASAALLVAAPAAA). 2 PpiC domains span residues 186–288 (QQDL…RLVD) and 302–400 (IVQT…QVLN).

Its subcellular location is the periplasm. The catalysed reaction is [protein]-peptidylproline (omega=180) = [protein]-peptidylproline (omega=0). Functionally, chaperone involved in the correct folding and assembly of outer membrane proteins. Recognizes specific patterns of aromatic residues and the orientation of their side chains, which are found more frequently in integral outer membrane proteins. May act in both early periplasmic and late outer membrane-associated steps of protein maturation. The chain is Chaperone SurA from Burkholderia orbicola (strain AU 1054).